The primary structure comprises 890 residues: Protein FAM171A1 (890 aa).

The first 21 residues, 1 to 21 (MSRSAALLLCLLGCHVWKAVT), serve as a signal peptide directing secretion. Residues 22–303 (KTLREPGAGA…VTQDITTYHT (282 aa)) lie on the Extracellular side of the membrane. N190 and N194 each carry an N-linked (GlcNAc...) asparagine glycan. Residues 304–324 (VFLLAILGGMAFILLVLLCLL) traverse the membrane as a helical segment. The Cytoplasmic portion of the chain corresponds to 325-890 (LYYCRRKCMK…ERPLMAFNIK (566 aa)). A phosphoserine mark is found at S358, S360, S371, S422, S443, and S525. 2 disordered regions span residues 730–759 (AGRNGSNDASLDSGVDMNEPKSARKGRGDA) and 818–890 (EGSS…FNIK). A compositionally biased stretch (basic and acidic residues) spans 747–757 (NEPKSARKGRG). The segment covering 822–833 (RRSGGQLPSLQE) has biased composition (polar residues). 2 positions are modified to phosphoserine: S849 and S855. Residues 858–869 (EEEEDDDDDDQG) show a composition bias toward acidic residues. The segment covering 870–883 (EDKKSPWQKREERP) has biased composition (basic and acidic residues).

Belongs to the FAM171 family. Interacts with ADAM10, NSG1 and OAZ1.

It localises to the cell membrane. Its function is as follows. Involved in the regulation of the cytoskeletal dynamics, plays a role in actin stress fiber formation. In Pongo abelii (Sumatran orangutan), this protein is Protein FAM171A1 (FAM171A1).